The following is a 661-amino-acid chain: Acetyl-coenzyme A synthetase (661 aa).

Residues 197–200 and Thr320 each bind CoA; that span reads RGGK. Residues 396–398, 420–425, Asp511, and Arg526 contribute to the ATP site; these read GEP and DTWWQT. Ser534 serves as a coordination point for CoA. Arg537 is an ATP binding site. Residues Val548 and Val553 each coordinate Mg(2+). Lys620 carries the N6-acetyllysine modification.

It belongs to the ATP-dependent AMP-binding enzyme family. It depends on Mg(2+) as a cofactor. Acetylated. Deacetylation by the SIR2-homolog deacetylase activates the enzyme.

It catalyses the reaction acetate + ATP + CoA = acetyl-CoA + AMP + diphosphate. Functionally, catalyzes the conversion of acetate into acetyl-CoA (AcCoA), an essential intermediate at the junction of anabolic and catabolic pathways. AcsA undergoes a two-step reaction. In the first half reaction, AcsA combines acetate with ATP to form acetyl-adenylate (AcAMP) intermediate. In the second half reaction, it can then transfer the acetyl group from AcAMP to the sulfhydryl group of CoA, forming the product AcCoA. The protein is Acetyl-coenzyme A synthetase of Leptospira interrogans serogroup Icterohaemorrhagiae serovar Lai (strain 56601).